A 244-amino-acid polypeptide reads, in one-letter code: Tetraspanin-7 (244 aa).

Topologically, residues methionine 1–lysine 11 are cytoplasmic. A helical transmembrane segment spans residues threonine 12–glycine 35. Residues lysine 36–threonine 51 are Extracellular-facing. N-linked (GlcNAc...) asparagine glycosylation is present at asparagine 49. A helical transmembrane segment spans residues asparagine 52–phenylalanine 70. The Cytoplasmic segment spans residues glycine 71–tryptophan 81. The helical transmembrane segment at methionine 82–phenylalanine 107 threads the bilayer. Residues arginine 108–methionine 208 lie on the Extracellular side of the membrane. N-linked (GlcNAc...) asparagine glycans are attached at residues asparagine 150, asparagine 153, asparagine 172, and asparagine 183. The helical transmembrane segment at glycine 209–alanine 229 threads the bilayer. Topologically, residues cysteine 230–valine 244 are cytoplasmic.

It belongs to the tetraspanin (TM4SF) family.

It is found in the membrane. Functionally, may be involved in cell proliferation and cell motility. The sequence is that of Tetraspanin-7 (TSPAN7) from Pongo pygmaeus (Bornean orangutan).